Reading from the N-terminus, the 150-residue chain is Large ribosomal subunit protein uL15 (150 aa).

The disordered stretch occupies residues 1-52; sequence MDLSNLKPAEGSVRKNSKRIGRGEGSGKGGTATRGHKGAKSRSGYSKKIGFE. The span at 23–32 shows a compositional bias: gly residues; the sequence is GEGSGKGGTA.

The protein belongs to the universal ribosomal protein uL15 family. Part of the 50S ribosomal subunit.

Binds to the 23S rRNA. This is Large ribosomal subunit protein uL15 from Christiangramia forsetii (strain DSM 17595 / CGMCC 1.15422 / KT0803) (Gramella forsetii).